The chain runs to 126 residues: SH2 domain-containing protein 1A (126 aa).

The region spanning 6–104 (VYHGKISRET…VTPLQYPVEK (99 aa)) is the SH2 domain. The segment at 67–92 (ETAPGVHKRFFRKVKNLISAFQKPDQ) is interaction with FYN SH3 domain. Residue lysine 89 is modified to N6-acetyllysine. The tract at residues 100-126 (YPVEKSSGRGPQAPTGRRDSDICLNAP) is disordered.

In terms of assembly, interacts with CD84, CD244, LY9, SLAMF1 and FYN. Interacts with NTRK1, NTRK2 and NTRK3. In terms of tissue distribution, T-cells.

The protein resides in the cytoplasm. Cytoplasmic adapter regulating receptors of the signaling lymphocytic activation molecule (SLAM) family such as SLAMF1, CD244, LY9, CD84, SLAMF6 and SLAMF7. In SLAM signaling seems to cooperate with SH2D1B/EAT-2. Initially it has been proposed that association with SLAMF1 prevents SLAMF1 binding to inhibitory effectors including INPP5D/SHIP1 and PTPN11/SHP-2. However, by simultaneous interactions, recruits FYN which subsequently phosphorylates and activates SLAMF1. Positively regulates CD244/2B4- and CD84-mediated natural killer (NK) cell functions. Can also promote CD48-, SLAMF6 -, LY9-, and SLAMF7-mediated NK cell activation. In the context of NK cell-mediated cytotoxicity enhances conjugate formation with target cells. May also regulate the activity of the neurotrophin receptors NTRK1, NTRK2 and NTRK3. This Mus musculus (Mouse) protein is SH2 domain-containing protein 1A (Sh2d1a).